The primary structure comprises 335 residues: Glucokinase (335 aa).

An ATP-binding site is contributed by 11-16 (ADIGGT).

The protein belongs to the bacterial glucokinase family.

Its subcellular location is the cytoplasm. It carries out the reaction D-glucose + ATP = D-glucose 6-phosphate + ADP + H(+). The chain is Glucokinase from Stenotrophomonas maltophilia (strain R551-3).